The sequence spans 85 residues: RNA-binding protein Hfq (85 aa).

One can recognise a Sm domain in the interval 9–68 (DPFLNALRRERIPVSIYLVNGIKLQGQVESFDQFVILLKNTVSQMVYKHAISTVVPARPV).

The protein belongs to the Hfq family. In terms of assembly, homohexamer.

Functionally, RNA chaperone that binds small regulatory RNA (sRNAs) and mRNAs to facilitate mRNA translational regulation in response to envelope stress, environmental stress and changes in metabolite concentrations. Also binds with high specificity to tRNAs. This is RNA-binding protein Hfq from Tolumonas auensis (strain DSM 9187 / NBRC 110442 / TA 4).